Here is a 610-residue protein sequence, read N- to C-terminus: Glutamine--fructose-6-phosphate aminotransferase [isomerizing] (610 aa).

C2 acts as the Nucleophile; for GATase activity in catalysis. The region spanning 2-217 (CGIVGYVGQK…DKEFVVLTND (216 aa)) is the Glutamine amidotransferase type-2 domain. SIS domains lie at 284–424 (ITKE…LKGS) and 453–600 (LIKE…VDKP). K605 functions as the For Fru-6P isomerization activity in the catalytic mechanism.

Homodimer.

Its subcellular location is the cytoplasm. It carries out the reaction D-fructose 6-phosphate + L-glutamine = D-glucosamine 6-phosphate + L-glutamate. Its function is as follows. Catalyzes the first step in hexosamine metabolism, converting fructose-6P into glucosamine-6P using glutamine as a nitrogen source. The sequence is that of Glutamine--fructose-6-phosphate aminotransferase [isomerizing] from Clostridium perfringens (strain 13 / Type A).